Consider the following 41-residue polypeptide: Photosystem I reaction center subunit IX (41 aa).

A helical membrane pass occupies residues 7–27 (YLSTAPVVAFAWLTFTAGFII).

It belongs to the PsaJ family.

The protein resides in the plastid. The protein localises to the chloroplast thylakoid membrane. May help in the organization of the PsaE and PsaF subunits. The protein is Photosystem I reaction center subunit IX of Stigeoclonium helveticum (Green alga).